A 92-amino-acid chain; its full sequence is YcgL domain-containing protein ASA_2166 (92 aa).

The region spanning 1–85 (MLCAVYKSRK…PPENLLEQHK (85 aa)) is the YcgL domain.

This Aeromonas salmonicida (strain A449) protein is YcgL domain-containing protein ASA_2166.